Consider the following 473-residue polypeptide: Serine palmitoyltransferase 1 (473 aa).

Over 1 to 15 the chain is Lumenal; that stretch reads MATVAEQWVLVEMVQ. Positions 1-66 are interaction with SPTLC2; that stretch reads MATVAEQWVL…KEELIEEWQP (66 aa). The helical transmembrane segment at 16–36 threads the bilayer; sequence ALYEAPAYHLILEGILILWII. Residues 37 to 473 are Cytoplasmic-facing; it reads RLLFSKTYKL…ISEVAQTVLL (437 aa). A Phosphotyrosine; by ABL modification is found at tyrosine 164.

The protein belongs to the class-II pyridoxal-phosphate-dependent aminotransferase family. As to quaternary structure, component of the serine palmitoyltransferase (SPT) complex, which is also composed of SPTLC2 or SPTLC3 and SPTSSA or SPTSSB. The heterodimer with SPTLC2 or SPTLC3 forms the catalytic core of the enzyme, while SPTSSA or SPTSSB subunits determine substrate specificity. SPT also interacts with ORMDL proteins, especially ORMDL3, which negatively regulate SPT activity in the presence of ceramides. Forms dimers of heterodimers with SPTLC2. Interacts with RTN4. It depends on pyridoxal 5'-phosphate as a cofactor. Post-translationally, phosphorylation at Tyr-164 inhibits activity and promotes cell survival.

It is found in the endoplasmic reticulum membrane. The catalysed reaction is L-serine + hexadecanoyl-CoA + H(+) = 3-oxosphinganine + CO2 + CoA. It carries out the reaction octadecanoyl-CoA + L-serine + H(+) = 3-oxoeicosasphinganine + CO2 + CoA. The enzyme catalyses tetradecanoyl-CoA + L-serine + H(+) = 3-oxohexadecasphinganine + CO2 + CoA. It catalyses the reaction dodecanoyl-CoA + L-serine + H(+) = 3-oxotetradecasphinganine + CO2 + CoA. It functions in the pathway lipid metabolism; sphingolipid metabolism. With respect to regulation, SPT complex catalytic activity is negatively regulated by ORMDL proteins, including ORMDL3, in the presence of ceramides. This mechanism allows to maintain ceramide levels at sufficient concentrations for the production of complex sphingolipids, but which prevents the accumulation of ceramides to levels that trigger apoptosis. In terms of biological role, component of the serine palmitoyltransferase multisubunit enzyme (SPT) that catalyzes the initial and rate-limiting step in sphingolipid biosynthesis by condensing L-serine and activated acyl-CoA (most commonly palmitoyl-CoA) to form long-chain bases. The SPT complex is also composed of SPTLC2 or SPTLC3 and SPTSSA or SPTSSB. Within this complex, the heterodimer with SPTLC2 or SPTLC3 forms the catalytic core. The composition of the serine palmitoyltransferase (SPT) complex determines the substrate preference. The SPTLC1-SPTLC2-SPTSSA complex shows a strong preference for C16-CoA substrate, while the SPTLC1-SPTLC3-SPTSSA isozyme uses both C14-CoA and C16-CoA as substrates, with a slight preference for C14-CoA. The SPTLC1-SPTLC2-SPTSSB complex shows a strong preference for C18-CoA substrate, while the SPTLC1-SPTLC3-SPTSSB isozyme displays an ability to use a broader range of acyl-CoAs, without apparent preference. Required for adipocyte cell viability and metabolic homeostasis. This chain is Serine palmitoyltransferase 1 (SPTLC1), found in Bos taurus (Bovine).